A 162-amino-acid polypeptide reads, in one-letter code: Phosphopantetheine adenylyltransferase (162 aa).

Residue Thr-9 coordinates substrate. ATP contacts are provided by residues 9 to 10 (TF) and His-17. Substrate is bound by residues Lys-41, Leu-77, and Arg-91. ATP is bound by residues 92 to 94 (GLR), Glu-102, and 127 to 133 (RQAIASK).

Belongs to the bacterial CoaD family. In terms of assembly, homohexamer. Mg(2+) serves as cofactor.

The protein localises to the cytoplasm. It carries out the reaction (R)-4'-phosphopantetheine + ATP + H(+) = 3'-dephospho-CoA + diphosphate. It functions in the pathway cofactor biosynthesis; coenzyme A biosynthesis; CoA from (R)-pantothenate: step 4/5. Its function is as follows. Reversibly transfers an adenylyl group from ATP to 4'-phosphopantetheine, yielding dephospho-CoA (dPCoA) and pyrophosphate. The polypeptide is Phosphopantetheine adenylyltransferase (Cereibacter sphaeroides (strain ATCC 17029 / ATH 2.4.9) (Rhodobacter sphaeroides)).